The sequence spans 428 residues: 5-methylthioadenosine/S-adenosylhomocysteine deaminase (428 aa).

Histidine 65 and histidine 67 together coordinate Zn(2+). Residues glutamate 94, arginine 158, and histidine 184 each coordinate substrate. A Zn(2+)-binding site is contributed by histidine 211. Positions 214 and 299 each coordinate substrate. Aspartate 299 contacts Zn(2+).

This sequence belongs to the metallo-dependent hydrolases superfamily. MTA/SAH deaminase family. Zn(2+) is required as a cofactor.

The enzyme catalyses S-adenosyl-L-homocysteine + H2O + H(+) = S-inosyl-L-homocysteine + NH4(+). The catalysed reaction is S-methyl-5'-thioadenosine + H2O + H(+) = S-methyl-5'-thioinosine + NH4(+). Functionally, catalyzes the deamination of 5-methylthioadenosine and S-adenosyl-L-homocysteine into 5-methylthioinosine and S-inosyl-L-homocysteine, respectively. Is also able to deaminate adenosine. The chain is 5-methylthioadenosine/S-adenosylhomocysteine deaminase from Moorella thermoacetica (strain ATCC 39073 / JCM 9320).